We begin with the raw amino-acid sequence, 219 residues long: Large ribosomal subunit protein uL4 (219 aa).

Residues 43–100 (AAKRQGTHSTKTRGEVSGGGKKPYRQKGTGRARQGSTRAPQFTGGGTVHGPQPRDYSQ) form a disordered region.

It belongs to the universal ribosomal protein uL4 family. Part of the 50S ribosomal subunit.

Functionally, one of the primary rRNA binding proteins, this protein initially binds near the 5'-end of the 23S rRNA. It is important during the early stages of 50S assembly. It makes multiple contacts with different domains of the 23S rRNA in the assembled 50S subunit and ribosome. In terms of biological role, forms part of the polypeptide exit tunnel. The chain is Large ribosomal subunit protein uL4 from Mycobacterium sp. (strain JLS).